The primary structure comprises 817 residues: Two pore calcium channel protein 1 (817 aa).

Over 1 to 101 (MSVILDDDVL…PKDARALAAY (101 aa)) the chain is Cytoplasmic. Positions 22–66 (PLTPSNGLGQEDLPSKNGGGQSGPNSQVPSLVSGADSPPSSPPGH) are disordered. Residues 102-122 (LFVHNHFFYMMELLTALLLLL) traverse the membrane as a helical segment. Over 123 to 137 (LSLCESPAVPALKLR) the chain is Extracellular. A helical membrane pass occupies residues 138-158 (TYVHATLELFALMVVVFELCM). Topologically, residues 159-172 (KLRWLGFHTFVRHK) are cytoplasmic. The helical transmembrane segment at 173–193 (RTMVKTSVLVVQFIEAIVVLV) threads the bilayer. Over 194-202 (RQTSHVRVT) the chain is Extracellular. A helical transmembrane segment spans residues 203–221 (RALRCIFLVDCRYCGGVRR). Residues 222-235 (NLRQIFQSLPPFMD) are Cytoplasmic-facing. The helical transmembrane segment at 236–256 (ILLLLLFFMIIFAILGFYLFS) threads the bilayer. Residues 257-263 (TNPSDPY) lie on the Extracellular side of the membrane. Positions 264–287 (FNTLENSIVNLFVLLTTANFPDVM) form an intramembrane region, helical; Pore-forming. Over 288 to 298 (MPSYSRNPWSC) the chain is Extracellular. The chain crosses the membrane as a helical span at residues 299 to 319 (VFFIVYLSIELYFIMNLLLAV). At 320–445 (VFDTFNDIEK…NILVNSKAFQ (126 aa)) the chain is on the cytoplasmic side. The chain crosses the membrane as a helical span at residues 446–466 (YFMYLVVAVNGVWILVETFML). At 467–480 (KGGNFISKHVPWSY) the chain is on the extracellular side. A helical membrane pass occupies residues 481–501 (LVFLTIYGVELFMKVAGLGPV). Residues 502–504 (EYL) are Cytoplasmic-facing. Residues 505–527 (SSGWNLFDFSVTAFAFLGLLALT) form a helical membrane-spanning segment. Topologically, residues 528 to 535 (LNMEPFYF) are extracellular. A helical membrane pass occupies residues 536–550 (IVVLRPLQLLRLFKL). The Cytoplasmic segment spans residues 551-574 (KKRYRNVLDTMFELLPRMASLGLT). The helical transmembrane segment at 575-595 (LLTFYYSFAIVGMEFFSGRLS) threads the bilayer. Topologically, residues 596–630 (PNCCNSSTVADAYRFINHTVGNKTKVEEGYYYLNN) are extracellular. Positions 631–654 (FDNILNSFVTLFELTVVNNWYIIM) form an intramembrane region, helical; Pore-forming. Topologically, residues 655–671 (EGVTSQTSHWSRLYFMT) are extracellular. A helical membrane pass occupies residues 672–692 (FYIVTMVVMTIIVAFILEAFV). The Cytoplasmic segment spans residues 693–817 (FRMNYSRKSQ…GSRQRSQTVT (125 aa)). The stretch at 770–794 (SLKMYQEEIQEWYEEHAREQEQQQL) forms a coiled coil. The disordered stretch occupies residues 785–817 (HAREQEQQQLRGSAPSPAAQQTPGSRQRSQTVT). Over residues 802–817 (AAQQTPGSRQRSQTVT) the composition is skewed to polar residues.

The protein belongs to the calcium channel alpha-1 subunit (TC 1.A.1.11) family. Two pore calcium channel subfamily. Dimer. Interacts with MTOR; the interaction is required for TPCN1 ATP sensitivity. Interacts with STX7, STX8 and STX12. Interacts with JPT2. Found in a complex with LSM12, TPCN1 and TPCN2. In terms of processing, N-glycosylated. Widely expressed. Expressed at relatively high level in kidney, liver and lung, and in the kidney it is expressed at inner medullary collecting ducts.

It is found in the lysosome membrane. Its subcellular location is the endosome membrane. It localises to the early endosome membrane. The protein resides in the recycling endosome membrane. It carries out the reaction Na(+)(in) = Na(+)(out). The catalysed reaction is Ca(2+)(in) = Ca(2+)(out). With respect to regulation, na(+) current is inhibited by ATP in a MTORC-dependent manner. ATP sensitivity is independent of PI(3,5)P2. Probably regulated by Mg(2+) ions, cytosolic Mg(2+) selectively inhibits outward current while lysosomal Mg(2+) modestly inhibits both the outward and inward currents. In the absence of Mg(2+), NAADP readily activates TPCN2, with properties similar to PI(3,5)P2. Both current elicited by PI(3,5)P2 as well as NAADP are inhibited by tetrandrine. Functionally, intracellular channel initially characterized as a non-selective Ca(2+)-permeable channel activated by NAADP (nicotinic acid adenine dinucleotide phosphate), it is also a voltage-gated highly-selective Na(+) channel activated directly by PI(3,5)P2 (phosphatidylinositol 3,5-bisphosphate) that senses pH changes and confers electrical excitability to organelles. Localizes to the early and recycling endosomes membranes where it plays a role in the uptake and processing of proteins and regulates organellar membrane excitability, membrane trafficking and pH homeostasis. Ion selectivity is not fixed but rather agonist-dependent and under defined ionic conditions, can be readily activated by both NAADP and PI(3,5)P2. Required for mTOR-dependent nutrient sensing. The protein is Two pore calcium channel protein 1 (Tpcn1) of Rattus norvegicus (Rat).